A 461-amino-acid polypeptide reads, in one-letter code: Photosystem II CP43 reaction center protein (461 aa).

The propeptide occupies 1 to 2 (ME). Thr-3 carries the N-acetylthreonine modification. Thr-3 carries the post-translational modification Phosphothreonine. A run of 5 helical transmembrane segments spans residues 57–81 (LFEVAHFVPEKPMYEQGLILLPHLA), 122–143 (LLGPETLEESFPFFGYVWKDRN), 166–188 (KALYFGGVYDTWAPGGGDVRKIT), 243–263 (KPFAWARRAFVWSGEAYLSYS), and 279–300 (WFNNTAYPSEFYGPTGPEASQA). Residue Glu-355 participates in [CaMn4O5] cluster binding. A helical membrane pass occupies residues 435–459 (RARAAAAGFEKGIDRDLEPVLSMTP).

This sequence belongs to the PsbB/PsbC family. PsbC subfamily. In terms of assembly, PSII is composed of 1 copy each of membrane proteins PsbA, PsbB, PsbC, PsbD, PsbE, PsbF, PsbH, PsbI, PsbJ, PsbK, PsbL, PsbM, PsbT, PsbX, PsbY, PsbZ, Psb30/Ycf12, at least 3 peripheral proteins of the oxygen-evolving complex and a large number of cofactors. It forms dimeric complexes. It depends on Binds multiple chlorophylls and provides some of the ligands for the Ca-4Mn-5O cluster of the oxygen-evolving complex. It may also provide a ligand for a Cl- that is required for oxygen evolution. PSII binds additional chlorophylls, carotenoids and specific lipids. as a cofactor.

The protein localises to the plastid. It is found in the chloroplast thylakoid membrane. One of the components of the core complex of photosystem II (PSII). It binds chlorophyll and helps catalyze the primary light-induced photochemical processes of PSII. PSII is a light-driven water:plastoquinone oxidoreductase, using light energy to abstract electrons from H(2)O, generating O(2) and a proton gradient subsequently used for ATP formation. This is Photosystem II CP43 reaction center protein from Ceratophyllum demersum (Rigid hornwort).